The primary structure comprises 277 residues: Ethanolamine ammonia-lyase small subunit (277 aa).

Adenosylcob(III)alamin contacts are provided by Val164, Glu185, and Cys214.

The protein belongs to the EutC family. As to quaternary structure, the basic unit is a heterodimer which dimerizes to form tetramers. The heterotetramers trimerize; 6 large subunits form a core ring with 6 small subunits projecting outwards. Adenosylcob(III)alamin serves as cofactor.

The protein resides in the bacterial microcompartment. It carries out the reaction ethanolamine = acetaldehyde + NH4(+). It participates in amine and polyamine degradation; ethanolamine degradation. Its function is as follows. Catalyzes the deamination of various vicinal amino-alcohols to oxo compounds. Allows this organism to utilize ethanolamine as the sole source of nitrogen and carbon in the presence of external vitamin B12. The sequence is that of Ethanolamine ammonia-lyase small subunit from Pseudomonas fluorescens (strain SBW25).